Consider the following 2051-residue polypeptide: Fatty acid synthase subunit beta (2051 aa).

At methionine 1 the chain carries N-acetylmethionine. Positions 1 to 468 are acetyltransferase; it reads MDAYSTRPLT…VYDTFDGSDL (468 aa). Serine 274 (for acetyltransferase activity) is an active-site residue. Positions 480-868 are enoyl reductase; that stretch reads VDCIIRLPVK…TRGVMLWKEF (389 aa). Threonine 733 carries the post-translational modification Phosphothreonine. At serine 1121 the chain carries Phosphoserine. Residues 1144–1626 form a dehydratase region; sequence GSEINWRHAS…LPNTALKTSI (483 aa). Lysine 1364 participates in a covalent cross-link: Glycyl lysine isopeptide (Lys-Gly) (interchain with G-Cter in ubiquitin). One can recognise a MaoC-like domain in the interval 1523–1648; it reads NGSTLEQKVN…KFETRNEDDV (126 aa). The segment at 1627-1845 is malonyl/palmitoyl transferase; sequence QHVGMINGRK…MTMQVAVPRD (219 aa). Serine 1808 acts as the For malonyltransferase activity in catalysis.

Belongs to the fungal fatty acid synthetase subunit beta family. [Alpha(6)beta(6)] hexamers of two multifunctional subunits (alpha and beta).

It catalyses the reaction acetyl-CoA + n malonyl-CoA + 2n NADPH + 4n H(+) = a long-chain-acyl-CoA + n CoA + n CO2 + 2n NADP(+).. It carries out the reaction holo-[ACP] + acetyl-CoA = acetyl-[ACP] + CoA. The catalysed reaction is holo-[ACP] + malonyl-CoA = malonyl-[ACP] + CoA. The enzyme catalyses a (3R)-hydroxyacyl-[ACP] = a (2E)-enoyl-[ACP] + H2O. It catalyses the reaction a 2,3-saturated acyl-[ACP] + NAD(+) = a (2E)-enoyl-[ACP] + NADH + H(+). It carries out the reaction (9Z)-octadecenoyl-[ACP] + H2O = (9Z)-octadecenoate + holo-[ACP] + H(+). In terms of biological role, fatty acid synthetase catalyzes the formation of long-chain fatty acids from acetyl-CoA, malonyl-CoA and NADPH. The beta subunit contains domains for: [acyl-carrier-protein] acetyltransferase and malonyltransferase, S-acyl fatty acid synthase thioesterase, enoyl-[acyl-carrier-protein] reductase, and 3-hydroxypalmitoyl-[acyl-carrier-protein] dehydratase. The protein is Fatty acid synthase subunit beta (FAS1) of Saccharomyces cerevisiae (strain ATCC 204508 / S288c) (Baker's yeast).